A 202-amino-acid polypeptide reads, in one-letter code: MSALETQALGMIPMVIEQSGRGERSYDIYSRLLKERVIFLVGEVNDQTANLVVAQLLFLESENPDKDISFYINSPGGSVTAGMAIYDTMQFIKPDVSTLCCGFAASMGAFLLAAGAKGKRYSLPNSKIMIHQVLGGARGQATDIEIHARDILRTKEQMNRILAERTGQPIEKVKADTERDYFMTADEAKDYGIVDQVIAKRP.

Ser106 functions as the Nucleophile in the catalytic mechanism. Residue His131 is part of the active site.

Belongs to the peptidase S14 family. In terms of assembly, fourteen ClpP subunits assemble into 2 heptameric rings which stack back to back to give a disk-like structure with a central cavity, resembling the structure of eukaryotic proteasomes.

It localises to the cytoplasm. The enzyme catalyses Hydrolysis of proteins to small peptides in the presence of ATP and magnesium. alpha-casein is the usual test substrate. In the absence of ATP, only oligopeptides shorter than five residues are hydrolyzed (such as succinyl-Leu-Tyr-|-NHMec, and Leu-Tyr-Leu-|-Tyr-Trp, in which cleavage of the -Tyr-|-Leu- and -Tyr-|-Trp bonds also occurs).. Functionally, cleaves peptides in various proteins in a process that requires ATP hydrolysis. Has a chymotrypsin-like activity. Plays a major role in the degradation of misfolded proteins. This is ATP-dependent Clp protease proteolytic subunit from Acidovorax sp. (strain JS42).